The sequence spans 209 residues: Kynurenine formamidase (209 aa).

Substrate is bound at residue tryptophan 18. Positions 48, 52, and 54 each coordinate Zn(2+). Histidine 58 acts as the Proton donor/acceptor in catalysis. Residues histidine 160 and glutamate 172 each coordinate Zn(2+).

This sequence belongs to the Cyclase 1 superfamily. KynB family. Homodimer. Requires Zn(2+) as cofactor.

The catalysed reaction is N-formyl-L-kynurenine + H2O = L-kynurenine + formate + H(+). It functions in the pathway amino-acid degradation; L-tryptophan degradation via kynurenine pathway; L-kynurenine from L-tryptophan: step 2/2. Its function is as follows. Catalyzes the hydrolysis of N-formyl-L-kynurenine to L-kynurenine, the second step in the kynurenine pathway of tryptophan degradation. This is Kynurenine formamidase from Maricaulis maris (strain MCS10) (Caulobacter maris).